A 623-amino-acid chain; its full sequence is AFI1-like protein C776.06c (623 aa).

A uDENN domain is found at 5 to 204 (DYLLTAIFDP…IDNIPKPGSE (200 aa)). The 139-residue stretch at 248–386 (ISNLINTFID…SDATTTMDTK (139 aa)) folds into the cDENN domain. A dDENN domain is found at 388–476 (LFNNTSPFTP…WSWDNDDEKV (89 aa)).

Belongs to the AFI1/mesA family.

Its subcellular location is the cytoplasm. It localises to the cell cortex. The protein localises to the nucleus. Functionally, involved in polarity establishment. The sequence is that of AFI1-like protein C776.06c from Schizosaccharomyces pombe (strain 972 / ATCC 24843) (Fission yeast).